We begin with the raw amino-acid sequence, 227 residues long: Cytochrome c oxidase subunit 2 (227 aa).

The Mitochondrial intermembrane segment spans residues 1–14 (MAYPFQLGFQDAAS). A helical membrane pass occupies residues 15–45 (PIMEELLHFHDHTLMIVFLISSLVLYIITLM). Residues 46–59 (LTTKLTHTSTMDAQ) are Mitochondrial matrix-facing. The chain crosses the membrane as a helical span at residues 60-87 (EVETVWTILPAIILILIALPSLRILYMM). Residues 88 to 227 (DEVNNPSLTV…VFEKWSVSML (140 aa)) lie on the Mitochondrial intermembrane side of the membrane. Residues His-161, Cys-196, Glu-198, Cys-200, His-204, and Met-207 each coordinate Cu cation. Glu-198 is a Mg(2+) binding site.

This sequence belongs to the cytochrome c oxidase subunit 2 family. As to quaternary structure, component of the cytochrome c oxidase (complex IV, CIV), a multisubunit enzyme composed of 14 subunits. The complex is composed of a catalytic core of 3 subunits MT-CO1, MT-CO2 and MT-CO3, encoded in the mitochondrial DNA, and 11 supernumerary subunits COX4I, COX5A, COX5B, COX6A, COX6B, COX6C, COX7A, COX7B, COX7C, COX8 and NDUFA4, which are encoded in the nuclear genome. The complex exists as a monomer or a dimer and forms supercomplexes (SCs) in the inner mitochondrial membrane with NADH-ubiquinone oxidoreductase (complex I, CI) and ubiquinol-cytochrome c oxidoreductase (cytochrome b-c1 complex, complex III, CIII), resulting in different assemblies (supercomplex SCI(1)III(2)IV(1) and megacomplex MCI(2)III(2)IV(2)). Found in a complex with TMEM177, COA6, COX18, COX20, SCO1 and SCO2. Interacts with TMEM177 in a COX20-dependent manner. Interacts with COX20. Interacts with COX16. Requires Cu cation as cofactor.

The protein localises to the mitochondrion inner membrane. It catalyses the reaction 4 Fe(II)-[cytochrome c] + O2 + 8 H(+)(in) = 4 Fe(III)-[cytochrome c] + 2 H2O + 4 H(+)(out). Its function is as follows. Component of the cytochrome c oxidase, the last enzyme in the mitochondrial electron transport chain which drives oxidative phosphorylation. The respiratory chain contains 3 multisubunit complexes succinate dehydrogenase (complex II, CII), ubiquinol-cytochrome c oxidoreductase (cytochrome b-c1 complex, complex III, CIII) and cytochrome c oxidase (complex IV, CIV), that cooperate to transfer electrons derived from NADH and succinate to molecular oxygen, creating an electrochemical gradient over the inner membrane that drives transmembrane transport and the ATP synthase. Cytochrome c oxidase is the component of the respiratory chain that catalyzes the reduction of oxygen to water. Electrons originating from reduced cytochrome c in the intermembrane space (IMS) are transferred via the dinuclear copper A center (CU(A)) of subunit 2 and heme A of subunit 1 to the active site in subunit 1, a binuclear center (BNC) formed by heme A3 and copper B (CU(B)). The BNC reduces molecular oxygen to 2 water molecules using 4 electrons from cytochrome c in the IMS and 4 protons from the mitochondrial matrix. This chain is Cytochrome c oxidase subunit 2 (MT-CO2), found in Balaenoptera physalus (Fin whale).